The chain runs to 884 residues: Cytosolic carboxypeptidase-like protein 5 (884 aa).

One can recognise a Peptidase M14 domain in the interval 157 to 570; the sequence is YPFSYSDCQD…AMAIAALDMA (414 aa). Residues His252 and Glu255 each contribute to the Zn(2+) site. Disordered stretches follow at residues 343–364 and 376–401; these read HPQS…PLSD and HLGH…KASG. His434 is a binding site for Zn(2+). Glu516 serves as the catalytic Proton donor/acceptor. Disordered stretches follow at residues 603-737 and 784-859; these read LSST…HSTG and QVRP…RICY. Residues 620–635 show a composition bias toward polar residues; that stretch reads PPRSNSGLPVSCSENP. 2 stretches are compositionally biased toward low complexity: residues 641–666 and 714–737; these read SFST…NSPS and PTSS…HSTG. Ser839 bears the Phosphoserine mark. A compositionally biased stretch (polar residues) spans 846-857; the sequence is ISCSLSDSQSRI.

This sequence belongs to the peptidase M14 family. It depends on Zn(2+) as a cofactor.

It is found in the cytoplasm. Its subcellular location is the cytosol. The protein resides in the nucleus. The protein localises to the cytoskeleton. It localises to the spindle. It is found in the midbody. It catalyses the reaction gamma-L-glutamyl-L-glutamyl-[protein] + H2O = L-glutamyl-[protein] + L-glutamate. The enzyme catalyses (L-glutamyl)(n+1)-gamma-L-glutamyl-L-glutamyl-[protein] + H2O = (L-glutamyl)(n)-gamma-L-glutamyl-L-glutamyl-[protein] + L-glutamate. It carries out the reaction C-terminal L-alpha-aminoacyl-L-glutamyl-[tubulin] + H2O = C-terminal L-alpha-aminoacyl-[tubulin] + L-glutamate. The catalysed reaction is C-terminal L-alpha-aminoacyl-L-glutamyl-L-glutamyl-[tubulin] + H2O = C-terminal L-alpha-aminoacyl-L-glutamyl-[tubulin] + L-glutamate. Its function is as follows. Metallocarboxypeptidase that mediates deglutamylation of tubulin and non-tubulin target proteins. Catalyzes the removal of polyglutamate side chains present on the gamma-carboxyl group of glutamate residues within the C-terminal tail of alpha- and beta-tubulin. Cleaves alpha- and gamma-linked polyglutamate tubulin side-chain, as well as the branching point glutamate. Also catalyzes the removal of alpha-linked glutamate residues from the carboxy-terminus of alpha-tubulin. Mediates deglutamylation of nucleotidyltransferase CGAS, leading to CGAS antiviral defense response activation. This is Cytosolic carboxypeptidase-like protein 5 (AGBL5) from Ailuropoda melanoleuca (Giant panda).